The primary structure comprises 591 residues: Serine/threonine-protein kinase Nek2 (591 aa).

The Protein kinase domain maps to 4–258 (YEVLEQIGKG…AAQLLKHPQL (255 aa)). ATP is bound by residues 10–18 (IGKGAFGSA) and Lys33. Asp129 (proton acceptor) is an active-site residue. 3 disordered regions span residues 309–331 (LGNE…SSTR), 387–408 (EPPK…TTPN), and 500–534 (RTDG…DTSS). 2 stretches are compositionally biased toward polar residues: residues 391–408 (TSYN…TTPN) and 504–534 (DNGS…DTSS).

The protein belongs to the protein kinase superfamily. NEK Ser/Thr protein kinase family. NIMA subfamily.

It carries out the reaction L-seryl-[protein] + ATP = O-phospho-L-seryl-[protein] + ADP + H(+). It catalyses the reaction L-threonyl-[protein] + ATP = O-phospho-L-threonyl-[protein] + ADP + H(+). May be involved in plant development processes. The chain is Serine/threonine-protein kinase Nek2 (NEK2) from Oryza sativa subsp. indica (Rice).